The sequence spans 126 residues: Large ribosomal subunit protein bL12 (126 aa).

The protein belongs to the bacterial ribosomal protein bL12 family. In terms of assembly, homodimer. Part of the ribosomal stalk of the 50S ribosomal subunit. Forms a multimeric L10(L12)X complex, where L10 forms an elongated spine to which 2 to 4 L12 dimers bind in a sequential fashion. Binds GTP-bound translation factors.

In terms of biological role, forms part of the ribosomal stalk which helps the ribosome interact with GTP-bound translation factors. Is thus essential for accurate translation. The protein is Large ribosomal subunit protein bL12 of Legionella pneumophila (strain Paris).